The chain runs to 489 residues: Equilibrative nucleobase transporter 1 (489 aa).

The chain crosses the membrane as a helical span at residues 17-37 (LLECLGFAGVLFGWTSLVFVF). Residue Asn-56 is glycosylated (N-linked (GlcNAc...) asparagine). Transmembrane regions (helical) follow at residues 72-92 (LIFTLASFTINFMTFPTGYIF), 102-122 (LIAIFLYTSATLTIAFTSADS), 123-143 (AVLLFLAMPMLAVGGILFLIT), and 158-180 (IITMYNGAFDSSSAVFLIIKLLY). At Ser-253 the chain carries Phosphoserine. Phosphothreonine is present on Thr-258. The next 6 membrane-spanning stretches (helical) occupy residues 277 to 297 (FAWHVVWLSVIQLWHYLFIGT), 318 to 338 (NAFAVTQFFGVLCAPWNGLLM), 358 to 380 (AAALRSVVPSLTLTSLLSLGFAV), 402 to 422 (SFLYGCNAAFLTLAFPSEHFG), 426 to 446 (GLVMALSAVVSLLQFPLFTLI), and 455 to 475 (LYVNLMLVLLTLLTFIHPFLV).

The protein belongs to the SLC43A transporter (TC 2.A.1.44) family.

The protein localises to the basolateral cell membrane. The catalysed reaction is adenine(out) = adenine(in). The enzyme catalyses guanine(out) = guanine(in). It carries out the reaction hypoxanthine(out) = hypoxanthine(in). Functionally, sodium-independent purine-selective nucleobase transporter which mediates the equilibrative transport of extracellular purine nucleobases such as adenine, guanine and hypoxanthine. May regulate fatty acid (FA) transport in adipocytes, acting as a positive regulator of FA efflux and as a negative regulator of FA uptake. This Bos taurus (Bovine) protein is Equilibrative nucleobase transporter 1 (SLC43A3).